The primary structure comprises 188 residues: Elongation factor P (188 aa).

Belongs to the elongation factor P family.

The protein localises to the cytoplasm. Its pathway is protein biosynthesis; polypeptide chain elongation. Involved in peptide bond synthesis. Stimulates efficient translation and peptide-bond synthesis on native or reconstituted 70S ribosomes in vitro. Probably functions indirectly by altering the affinity of the ribosome for aminoacyl-tRNA, thus increasing their reactivity as acceptors for peptidyl transferase. The polypeptide is Elongation factor P (Chloroherpeton thalassium (strain ATCC 35110 / GB-78)).